The following is a 227-amino-acid chain: MAYPYELGFQDASSPIMEELLHFHDHTLMIVFLISTLVLYLITIMLTTKLTHTSTMDAQEIETIWTILPAIILILIALPSLRILYMMDEINSPSLTVKTMGHQWYWSYEYTDYEELSFDSYMVPTMDLKPGELRLLEVDNRVVLPMEMPVRMLISSEDVLHSWAVPSLGLKTDAIPGRLNQATLMSSRPGLYYGQCSEICGSNHSFMPIVLEMVPLKDFEIWSSSML.

The Mitochondrial intermembrane portion of the chain corresponds to 1-14; sequence MAYPYELGFQDASS. Residues 15 to 45 traverse the membrane as a helical segment; it reads PIMEELLHFHDHTLMIVFLISTLVLYLITIM. The Mitochondrial matrix segment spans residues 46–59; that stretch reads LTTKLTHTSTMDAQ. The helical transmembrane segment at 60–87 threads the bilayer; the sequence is EIETIWTILPAIILILIALPSLRILYMM. Residues 88-227 are Mitochondrial intermembrane-facing; sequence DEINSPSLTV…DFEIWSSSML (140 aa). Cu cation is bound by residues histidine 161, cysteine 196, glutamate 198, cysteine 200, histidine 204, and methionine 207. Glutamate 198 provides a ligand contact to Mg(2+).

It belongs to the cytochrome c oxidase subunit 2 family. In terms of assembly, component of the cytochrome c oxidase (complex IV, CIV), a multisubunit enzyme composed of 14 subunits. The complex is composed of a catalytic core of 3 subunits MT-CO1, MT-CO2 and MT-CO3, encoded in the mitochondrial DNA, and 11 supernumerary subunits COX4I, COX5A, COX5B, COX6A, COX6B, COX6C, COX7A, COX7B, COX7C, COX8 and NDUFA4, which are encoded in the nuclear genome. The complex exists as a monomer or a dimer and forms supercomplexes (SCs) in the inner mitochondrial membrane with NADH-ubiquinone oxidoreductase (complex I, CI) and ubiquinol-cytochrome c oxidoreductase (cytochrome b-c1 complex, complex III, CIII), resulting in different assemblies (supercomplex SCI(1)III(2)IV(1) and megacomplex MCI(2)III(2)IV(2)). Found in a complex with TMEM177, COA6, COX18, COX20, SCO1 and SCO2. Interacts with TMEM177 in a COX20-dependent manner. Interacts with COX20. Interacts with COX16. Requires Cu cation as cofactor.

Its subcellular location is the mitochondrion inner membrane. The catalysed reaction is 4 Fe(II)-[cytochrome c] + O2 + 8 H(+)(in) = 4 Fe(III)-[cytochrome c] + 2 H2O + 4 H(+)(out). Its function is as follows. Component of the cytochrome c oxidase, the last enzyme in the mitochondrial electron transport chain which drives oxidative phosphorylation. The respiratory chain contains 3 multisubunit complexes succinate dehydrogenase (complex II, CII), ubiquinol-cytochrome c oxidoreductase (cytochrome b-c1 complex, complex III, CIII) and cytochrome c oxidase (complex IV, CIV), that cooperate to transfer electrons derived from NADH and succinate to molecular oxygen, creating an electrochemical gradient over the inner membrane that drives transmembrane transport and the ATP synthase. Cytochrome c oxidase is the component of the respiratory chain that catalyzes the reduction of oxygen to water. Electrons originating from reduced cytochrome c in the intermembrane space (IMS) are transferred via the dinuclear copper A center (CU(A)) of subunit 2 and heme A of subunit 1 to the active site in subunit 1, a binuclear center (BNC) formed by heme A3 and copper B (CU(B)). The BNC reduces molecular oxygen to 2 water molecules using 4 electrons from cytochrome c in the IMS and 4 protons from the mitochondrial matrix. The protein is Cytochrome c oxidase subunit 2 (MT-CO2) of Cavia aperea (Brazilian guinea pig).